Here is a 420-residue protein sequence, read N- to C-terminus: MVSRQEQFEQVQAVKKSINTASEEVKNQALLAMADHLVAATEEILAANALDMAAAKGKISDVMLDRLYLDADRIEAMARGIREVVALPDPIGEVLETSQLENGLVITKKRVAMGVIGIIYESRPNVTSDAAALTLKSGNAVVLRSGKDAYQTTHAIVTALKKGLETTTIHPNVIQLVEDTSRESSYAMMKAKGYLDLLIPRGGAGLINAVVENAIVPVIETGTGIVHVYVDKDADEDKALSIINNAKTSRPSVCNAMEVLLVHENKAASILPRLDQMLVAERKEAGLEPIQFRLDSKASQFVSGQAAETQDFDTEFLDYVLAVKVVSSLEEAVSHIESHSTHHSDAIVTENAEAAAYFTDQVDSAAVYVNASTRFTDGGQFGLGCEMGISTQKLHARGPMGLKELTSYKYVVTGDGQIRE.

Belongs to the gamma-glutamyl phosphate reductase family.

It localises to the cytoplasm. The catalysed reaction is L-glutamate 5-semialdehyde + phosphate + NADP(+) = L-glutamyl 5-phosphate + NADPH + H(+). The protein operates within amino-acid biosynthesis; L-proline biosynthesis; L-glutamate 5-semialdehyde from L-glutamate: step 2/2. Functionally, catalyzes the NADPH-dependent reduction of L-glutamate 5-phosphate into L-glutamate 5-semialdehyde and phosphate. The product spontaneously undergoes cyclization to form 1-pyrroline-5-carboxylate. The polypeptide is Gamma-glutamyl phosphate reductase (Streptococcus pneumoniae (strain P1031)).